Reading from the N-terminus, the 454-residue chain is Bifunctional protein GlmU (454 aa).

The segment at 1 to 226 is pyrophosphorylase; it reads MSLEIVILAA…AMEVQGVNDR (226 aa). UDP-N-acetyl-alpha-D-glucosamine is bound by residues 8–11, K22, Q73, 78–79, 99–101, G136, E151, N166, and N224; these read LAAG, GT, and YGD. D101 contacts Mg(2+). N224 lines the Mg(2+) pocket. The linker stretch occupies residues 227-247; the sequence is MQQAQLERHYQRLRAEELMRQ. Positions 248 to 454 are N-acetyltransferase; that stretch reads GVTLLDPQRL…NWKRPEKIKK (207 aa). UDP-N-acetyl-alpha-D-glucosamine-binding residues include R330 and K348. The Proton acceptor role is filled by H360. UDP-N-acetyl-alpha-D-glucosamine-binding residues include Y363 and N374. Residues A377, 383 to 384, S402, A420, and R437 contribute to the acetyl-CoA site; that span reads NY.

It in the N-terminal section; belongs to the N-acetylglucosamine-1-phosphate uridyltransferase family. The protein in the C-terminal section; belongs to the transferase hexapeptide repeat family. In terms of assembly, homotrimer. It depends on Mg(2+) as a cofactor.

The protein resides in the cytoplasm. The enzyme catalyses alpha-D-glucosamine 1-phosphate + acetyl-CoA = N-acetyl-alpha-D-glucosamine 1-phosphate + CoA + H(+). It carries out the reaction N-acetyl-alpha-D-glucosamine 1-phosphate + UTP + H(+) = UDP-N-acetyl-alpha-D-glucosamine + diphosphate. It participates in nucleotide-sugar biosynthesis; UDP-N-acetyl-alpha-D-glucosamine biosynthesis; N-acetyl-alpha-D-glucosamine 1-phosphate from alpha-D-glucosamine 6-phosphate (route II): step 2/2. Its pathway is nucleotide-sugar biosynthesis; UDP-N-acetyl-alpha-D-glucosamine biosynthesis; UDP-N-acetyl-alpha-D-glucosamine from N-acetyl-alpha-D-glucosamine 1-phosphate: step 1/1. It functions in the pathway bacterial outer membrane biogenesis; LPS lipid A biosynthesis. Functionally, catalyzes the last two sequential reactions in the de novo biosynthetic pathway for UDP-N-acetylglucosamine (UDP-GlcNAc). The C-terminal domain catalyzes the transfer of acetyl group from acetyl coenzyme A to glucosamine-1-phosphate (GlcN-1-P) to produce N-acetylglucosamine-1-phosphate (GlcNAc-1-P), which is converted into UDP-GlcNAc by the transfer of uridine 5-monophosphate (from uridine 5-triphosphate), a reaction catalyzed by the N-terminal domain. The chain is Bifunctional protein GlmU from Pseudomonas aeruginosa (strain LESB58).